We begin with the raw amino-acid sequence, 160 residues long: Putative pre-16S rRNA nuclease (160 aa).

Belongs to the YqgF nuclease family.

It localises to the cytoplasm. Could be a nuclease involved in processing of the 5'-end of pre-16S rRNA. The polypeptide is Putative pre-16S rRNA nuclease (Gluconobacter oxydans (strain 621H) (Gluconobacter suboxydans)).